Here is a 282-residue protein sequence, read N- to C-terminus: ATP synthase gamma chain (282 aa).

Belongs to the ATPase gamma chain family. As to quaternary structure, F-type ATPases have 2 components, CF(1) - the catalytic core - and CF(0) - the membrane proton channel. CF(1) has five subunits: alpha(3), beta(3), gamma(1), delta(1), epsilon(1). CF(0) has three main subunits: a, b and c.

It localises to the cell membrane. In terms of biological role, produces ATP from ADP in the presence of a proton gradient across the membrane. The gamma chain is believed to be important in regulating ATPase activity and the flow of protons through the CF(0) complex. The sequence is that of ATP synthase gamma chain from Clostridium botulinum (strain 657 / Type Ba4).